The sequence spans 282 residues: Pantothenate synthetase (282 aa).

30 to 37 contacts ATP; that stretch reads MGYLHEGH. H37 (proton donor) is an active-site residue. Residue Q61 participates in (R)-pantoate binding. Residue Q61 coordinates beta-alanine. An ATP-binding site is contributed by 147–150; sequence GMKD. Position 153 (Q153) interacts with (R)-pantoate. ATP-binding positions include V176 and 184 to 187; that span reads KSSR.

This sequence belongs to the pantothenate synthetase family. As to quaternary structure, homodimer.

The protein localises to the cytoplasm. The enzyme catalyses (R)-pantoate + beta-alanine + ATP = (R)-pantothenate + AMP + diphosphate + H(+). Its pathway is cofactor biosynthesis; (R)-pantothenate biosynthesis; (R)-pantothenate from (R)-pantoate and beta-alanine: step 1/1. In terms of biological role, catalyzes the condensation of pantoate with beta-alanine in an ATP-dependent reaction via a pantoyl-adenylate intermediate. The sequence is that of Pantothenate synthetase from Bacillus cereus (strain ATCC 10987 / NRS 248).